The primary structure comprises 472 residues: Adenosylhomocysteinase (472 aa).

Substrate is bound by residues threonine 64, aspartate 138, and glutamate 198. 199-201 (TTT) is an NAD(+) binding site. Lysine 228 and aspartate 232 together coordinate substrate. Residues asparagine 233, 262 to 267 (GFGDVG), glutamate 285, asparagine 320, 341 to 343 (IGH), and asparagine 386 each bind NAD(+).

Belongs to the adenosylhomocysteinase family. Requires NAD(+) as cofactor.

Its subcellular location is the cytoplasm. The catalysed reaction is S-adenosyl-L-homocysteine + H2O = L-homocysteine + adenosine. It functions in the pathway amino-acid biosynthesis; L-homocysteine biosynthesis; L-homocysteine from S-adenosyl-L-homocysteine: step 1/1. In terms of biological role, may play a key role in the regulation of the intracellular concentration of adenosylhomocysteine. In Prochlorococcus marinus subsp. pastoris (strain CCMP1986 / NIES-2087 / MED4), this protein is Adenosylhomocysteinase.